The following is a 181-amino-acid chain: Oligoribonuclease (181 aa).

Positions 8 to 171 (LIWIDLEMTG…DDIRESVAEL (164 aa)) constitute an Exonuclease domain. Residue Tyr-129 is part of the active site.

It belongs to the oligoribonuclease family.

The protein resides in the cytoplasm. Its function is as follows. 3'-to-5' exoribonuclease specific for small oligoribonucleotides. The chain is Oligoribonuclease from Enterobacter sp. (strain 638).